The following is a 25-amino-acid chain: Caerin-1.6 (25 aa).

Leucine 25 carries the leucine amide modification.

It belongs to the frog skin active peptide (FSAP) family. Caerin subfamily. Expressed by the skin dorsal glands.

It localises to the secreted. Its function is as follows. Antimicrobial peptide. Adopts an alpha helical conformation which can disrupt bacterial membranes. Strongly inhibits the formation of NO by neuronal nitric oxide synthase (nNOS) at micromolar concentrations. Acts by a non-competitive mechanism, probably by binding to calcium/calmodulin and as a consequence blocking calmodulin attachment to nNOS. In terms of biological role, does not show antimicrobial activity. The protein is Caerin-1.6 of Ranoidea chloris (Red-eyed tree frog).